Consider the following 340-residue polypeptide: Tetraacyldisaccharide 4'-kinase (340 aa).

Residue 47-54 participates in ATP binding; that stretch reads SVGGTGKT.

Belongs to the LpxK family.

The enzyme catalyses a lipid A disaccharide + ATP = a lipid IVA + ADP + H(+). It functions in the pathway glycolipid biosynthesis; lipid IV(A) biosynthesis; lipid IV(A) from (3R)-3-hydroxytetradecanoyl-[acyl-carrier-protein] and UDP-N-acetyl-alpha-D-glucosamine: step 6/6. In terms of biological role, transfers the gamma-phosphate of ATP to the 4'-position of a tetraacyldisaccharide 1-phosphate intermediate (termed DS-1-P) to form tetraacyldisaccharide 1,4'-bis-phosphate (lipid IVA). The sequence is that of Tetraacyldisaccharide 4'-kinase from Flavobacterium johnsoniae (strain ATCC 17061 / DSM 2064 / JCM 8514 / BCRC 14874 / CCUG 350202 / NBRC 14942 / NCIMB 11054 / UW101) (Cytophaga johnsonae).